The chain runs to 212 residues: Peptide methionine sulfoxide reductase MsrA (212 aa).

C52 is an active-site residue.

The protein belongs to the MsrA Met sulfoxide reductase family.

The enzyme catalyses L-methionyl-[protein] + [thioredoxin]-disulfide + H2O = L-methionyl-(S)-S-oxide-[protein] + [thioredoxin]-dithiol. It carries out the reaction [thioredoxin]-disulfide + L-methionine + H2O = L-methionine (S)-S-oxide + [thioredoxin]-dithiol. Its function is as follows. Has an important function as a repair enzyme for proteins that have been inactivated by oxidation. Catalyzes the reversible oxidation-reduction of methionine sulfoxide in proteins to methionine. The sequence is that of Peptide methionine sulfoxide reductase MsrA from Escherichia coli O17:K52:H18 (strain UMN026 / ExPEC).